The primary structure comprises 289 residues: Arabinogalactan O-methyltransferase 1 (289 aa).

The chain crosses the membrane as a helical span at residues 12 to 32; it reads IITGVLLAGLVGGALLFTSFI.

The protein belongs to the methyltransferase superfamily. As to quaternary structure, binds to the translation initiation factors TIF3E1.

It is found in the golgi apparatus membrane. Involved in the methylation of glucuronic acid of different plant cell wall component, but mainly on side chains of arabinogalactans. This Arabidopsis thaliana (Mouse-ear cress) protein is Arabinogalactan O-methyltransferase 1 (AGM1).